A 320-amino-acid chain; its full sequence is Beta-carotene 4-ketolase 3 (320 aa).

The catalysed reaction is echinenone + 2 AH2 + 2 O2 = canthaxanthin + 2 A + 3 H2O. It catalyses the reaction all-trans-beta-carotene + 2 AH2 + 2 O2 = echinenone + 2 A + 3 H2O. It functions in the pathway carotenoid biosynthesis. Its function is as follows. Involved in the biosynthesis of ketocarotenoids which are powerful anti-oxidative molecules. Catalyzes the conversion of beta-carotene to canthaxanthin via echinenone. This is Beta-carotene 4-ketolase 3 from Haematococcus lacustris (Green alga).